Reading from the N-terminus, the 381-residue chain is Endolytic peptidoglycan transglycosylase RlpA (381 aa).

The N-terminal stretch at 1–19 is a signal peptide; the sequence is MRKQLPVICVAAGIVLLAA. Cys20 is lipidated: N-palmitoyl cysteine. The S-diacylglycerol cysteine moiety is linked to residue Cys20. The interval 196–274 is disordered; it reads LPPRPDLSGG…QPAPVSAPVA (79 aa). Residues 208–218 are compositionally biased toward low complexity; sequence SASSAPAQPQG. An SPOR domain is found at 304 to 380; sequence AAASGRFVVQ…AQLQSFIASA (77 aa).

It belongs to the RlpA family.

The protein localises to the cell membrane. Lytic transglycosylase with a strong preference for naked glycan strands that lack stem peptides. The protein is Endolytic peptidoglycan transglycosylase RlpA of Salmonella typhimurium (strain LT2 / SGSC1412 / ATCC 700720).